We begin with the raw amino-acid sequence, 577 residues long: ATP-dependent zinc metalloprotease FtsH (577 aa).

Residues 1-3 (MKK) are Cytoplasmic-facing. A helical membrane pass occupies residues 4 to 24 (LYWIILIAVVLACSGILMSLH). The Extracellular segment spans residues 25–98 (LSVTKEEMTY…IKVDNSDSYS (74 aa)). A helical transmembrane segment spans residues 99-119 (ATKVIQIILIITVGTGVFLFI). At 120 to 577 (RTSGGKDKPL…IDRICLKEAV (458 aa)) the chain is on the cytoplasmic side. 186-193 (GPPGTGKT) lines the ATP pocket. A Zn(2+)-binding site is contributed by H409. E410 is a catalytic residue. H413 and D487 together coordinate Zn(2+).

In the central section; belongs to the AAA ATPase family. This sequence in the C-terminal section; belongs to the peptidase M41 family. Homohexamer. The cofactor is Zn(2+).

It is found in the cell membrane. In terms of biological role, acts as a processive, ATP-dependent zinc metallopeptidase for both cytoplasmic and membrane proteins. Plays a role in the quality control of integral membrane proteins. The polypeptide is ATP-dependent zinc metalloprotease FtsH (Lachnoclostridium phytofermentans (strain ATCC 700394 / DSM 18823 / ISDg) (Clostridium phytofermentans)).